The chain runs to 218 residues: Glutathione S-transferase Mu 1 (218 aa).

Residues 2 to 88 (PMTLGYWDVR…YLARKHGLCG (87 aa)) form the GST N-terminal domain. Glutathione contacts are provided by residues 7–8 (YW), 46–50 (WLSEK), 59–60 (NL), and 72–73 (QS). Residues 90 to 208 (TEEERIRVDI…KSSRFIRVPV (119 aa)) enclose the GST C-terminal domain. A substrate-binding site is contributed by tyrosine 116.

Belongs to the GST superfamily. Mu family. Homodimer. In terms of tissue distribution, well expressed in rabbit liver, brain and kidney.

It is found in the cytoplasm. It carries out the reaction RX + glutathione = an S-substituted glutathione + a halide anion + H(+). In terms of biological role, conjugation of reduced glutathione to a wide number of exogenous and endogenous hydrophobic electrophiles. This Oryctolagus cuniculus (Rabbit) protein is Glutathione S-transferase Mu 1.